The following is a 338-amino-acid chain: CDP-paratose 2-epimerase (338 aa).

Thr-124 is a substrate binding site. Tyr-164 functions as the Proton acceptor in the catalytic mechanism.

Belongs to the NAD(P)-dependent epimerase/dehydratase family. Homotetramer. The cofactor is NAD(+).

It carries out the reaction CDP-alpha-D-paratose = CDP-3,6-dideoxy-alpha-D-mannose. The protein operates within nucleotide-sugar biosynthesis; CDP-3,6-dideoxy-D-mannose biosynthesis; CDP-3,6-dideoxy-D-mannose from CTP and alpha-D-glucose 1-phosphate: step 5/5. In terms of biological role, catalyzes the isomeration of CDP-paratose to CDP-tyvelose. The protein is CDP-paratose 2-epimerase (rfbE) of Salmonella typhi.